Reading from the N-terminus, the 65-residue chain is Large ribosomal subunit protein bL35 (65 aa).

Positions 24 to 48 (RRKAGKSHLLEHKSSDKKRSMSKTT) are disordered. The span at 31–42 (HLLEHKSSDKKR) shows a compositional bias: basic and acidic residues.

It belongs to the bacterial ribosomal protein bL35 family.

This is Large ribosomal subunit protein bL35 from Nostoc punctiforme (strain ATCC 29133 / PCC 73102).